The sequence spans 361 residues: 3-dehydroquinate synthase (361 aa).

NAD(+)-binding positions include 72–77 (SGEKEK), 130–131 (TT), Lys-142, and Lys-151. Residues Glu-184, His-247, and His-264 each coordinate Zn(2+).

This sequence belongs to the sugar phosphate cyclases superfamily. Dehydroquinate synthase family. The cofactor is Co(2+). Requires Zn(2+) as cofactor. It depends on NAD(+) as a cofactor.

Its subcellular location is the cytoplasm. The catalysed reaction is 7-phospho-2-dehydro-3-deoxy-D-arabino-heptonate = 3-dehydroquinate + phosphate. Its pathway is metabolic intermediate biosynthesis; chorismate biosynthesis; chorismate from D-erythrose 4-phosphate and phosphoenolpyruvate: step 2/7. In terms of biological role, catalyzes the conversion of 3-deoxy-D-arabino-heptulosonate 7-phosphate (DAHP) to dehydroquinate (DHQ). This is 3-dehydroquinate synthase from Bacillus cereus (strain G9842).